We begin with the raw amino-acid sequence, 492 residues long: Cytoplasmic dynein 1 light intermediate chain 2 (492 aa).

61–68 (GEDGSGKT) serves as a coordination point for ATP. Disordered stretches follow at residues 188 to 207 (EEGC…GSDE), 370 to 423 (LAKQ…KNNA), and 437 to 492 (LSKK…ENEA). Phosphoserine is present on residues S194, S383, and S391. Polar residues predominate over residues 370–383 (LAKQPATPTRTSES). At R397 the chain carries Omega-N-methylarginine. A compositionally biased stretch (polar residues) spans 437–469 (LSKKTGSPGSPSAGGVQSTAKKSGQKTVLSNVQ). At T441 the chain carries Phosphothreonine. A phosphoserine mark is found at S443 and S446. A compositionally biased stretch (basic and acidic residues) spans 471-480 (ELDRMTRKPD). Positions 482-492 (MVTNSSTENEA) are enriched in polar residues.

The protein belongs to the dynein light intermediate chain family. Homodimer. The cytoplasmic dynein 1 complex consists of two catalytic heavy chains (HCs) and a number of non-catalytic subunits presented by intermediate chains (ICs), light intermediate chains (LICs) and light chains (LCs); the composition seems to vary in respect to the IC, LIC and LC composition. The heavy chain homodimer serves as a scaffold for the probable homodimeric assembly of the respective non-catalytic subunits. The ICs and LICs bind directly to the HC dimer and the LCs assemble on the IC dimer. Interacts with DYNC1H1; DYNC1LI1 and DYNC1LI2 bind mutually exclusive to DYNC1H.

The protein resides in the cytoplasm. It is found in the cytoskeleton. Acts as one of several non-catalytic accessory components of the cytoplasmic dynein 1 complex that are thought to be involved in linking dynein to cargos and to adapter proteins that regulate dynein function. Cytoplasmic dynein 1 acts as a motor for the intracellular retrograde motility of vesicles and organelles along microtubules. May play a role in binding dynein to membranous organelles or chromosomes. The sequence is that of Cytoplasmic dynein 1 light intermediate chain 2 (Dync1li2) from Mus musculus (Mouse).